The primary structure comprises 503 residues: Maturase K (503 aa).

The protein belongs to the intron maturase 2 family. MatK subfamily.

It is found in the plastid. Its subcellular location is the chloroplast. Its function is as follows. Usually encoded in the trnK tRNA gene intron. Probably assists in splicing its own and other chloroplast group II introns. This chain is Maturase K, found in Rosa californica (California wild rose).